A 355-amino-acid polypeptide reads, in one-letter code: Carbohydrate sulfotransferase 10 (355 aa).

The Cytoplasmic portion of the chain corresponds to 1 to 6 (MHHRWL). Residues 7–27 (LLVACFWVLFMLMVASKLITL) traverse the membrane as a helical; Signal-anchor for type II membrane protein segment. Residues 28–355 (TMKDPEGYGN…FGYKEPTFLF (328 aa)) are Lumenal-facing. N93 and N98 each carry an N-linked (GlcNAc...) asparagine glycan. 3'-phosphoadenylyl sulfate is bound by residues 126–132 (PKVGNTQ) and 188–196 (RDPFERLIS). An N-linked (GlcNAc...) asparagine glycan is attached at N316.

The protein belongs to the sulfotransferase 2 family.

The protein resides in the golgi apparatus membrane. Catalyzes the transfer of sulfate to position 3 of terminal glucuronic acid of both protein- and lipid-linked oligosaccharides. Participates in biosynthesis of HNK-1 carbohydrate structure, a sulfated glucuronyl-lactosaminyl residue carried by many neural recognition molecules. The chain is Carbohydrate sulfotransferase 10 (chst10) from Xenopus laevis (African clawed frog).